We begin with the raw amino-acid sequence, 231 residues long: NKG2-C type II integral membrane protein (231 aa).

Polar residues predominate over residues 1-12 (MNKQRGTFSEVS). The disordered stretch occupies residues 1 to 32 (MNKQRGTFSEVSLAQDPKRQQRKPKGNKSSIS). The Cytoplasmic portion of the chain corresponds to 1-70 (MNKQRGTFSE…CQGLLPPPEK (70 aa)). A helical; Signal-anchor for type II membrane protein membrane pass occupies residues 71-93 (LTAEVLGIICIVLMATVLKTIVL). At 94–231 (IPFLEQNNFS…SMIYHCKHKL (138 aa)) the chain is on the extracellular side. N-linked (GlcNAc...) asparagine glycosylation is present at Asn-100. In terms of domain architecture, C-type lectin spans 116–229 (HCPEEWITYS…GSSMIYHCKH (114 aa)). Cystine bridges form between Cys-117-Cys-128, Cys-145-Cys-227, and Cys-206-Cys-219. N-linked (GlcNAc...) asparagine glycans are attached at residues Asn-149 and Asn-178.

Heterodimer with KLRD1; disulfide-linked. KLRD1-KLRC2 receptor complex interacts with TYROBP homodimer; this interaction is necessary for the expression on the cell surface. KLRD1-KLRC2 receptor complex can bind with low affinity to HLA-E loaded with self-peptides derived from the signal sequence of classical MHC class Ia. Expressed in NK cell subsets, in particular in adaptive CD57-positive NK cells (at protein level). Expressed in terminally differentiated cytotoxic gamma-delta T cells (at protein level). Expressed in alpha-beta T cells subsets (at protein level). KLRD1-KLRC1 and KLRD1-KLRC2 are differentially expressed within NK and T cell populations, with only minor subsets expressing both receptor complexes (at protein level).

Its subcellular location is the cell membrane. Immune activating receptor involved in self-nonself discrimination. In complex with KLRD1 on cytotoxic lymphocyte subsets, recognizes non-classical major histocompatibility (MHC) class Ib HLA-E loaded with signal sequence-derived peptides from non-classical MHC class Ib HLA-G molecules, likely playing a role in the generation and effector functions of adaptive natural killer (NK) cells and in maternal-fetal tolerance during pregnancy. Regulates the effector functions of terminally differentiated cytotoxic lymphocyte subsets, and in particular may play a role in adaptive NK cell response to viral infection. Upon HLA-E-peptide binding, transmits intracellular signals via the adapter protein TYROBP/DAP12, triggering the phosphorylation of proximal signaling molecules and cell activation. The chain is NKG2-C type II integral membrane protein (KLRC2) from Homo sapiens (Human).